We begin with the raw amino-acid sequence, 589 residues long: PTS system mannitol-specific EIICB component (589 aa).

The Cytoplasmic portion of the chain corresponds to 1–25 (MEEKVSLKVRVQKLGTSLSNMVMPN). Residues 14–347 (LGTSLSNMVM…LHADKSTEDS (334 aa)) form the PTS EIIC type-2 domain. The chain crosses the membrane as a helical span at residues 26–47 (IGAFIAWGVLTALFIADGYLPN). Residues 48–51 (EQLA) lie on the Extracellular side of the membrane. A helical membrane pass occupies residues 52-72 (TVVGPMLTYLLPILIGYTGGY). The Cytoplasmic portion of the chain corresponds to 73 to 135 (MIHGQRGAVV…PGFEMLVNNF (63 aa)). A helical membrane pass occupies residues 136–157 (SAGLVGFALLLLAFYAIGPVVS). At 158-166 (TLTGAVGNG) the chain is on the extracellular side. A helical transmembrane segment spans residues 167–187 (VEAIVNARLLPMANIIIEPAK). Residues 188–274 (VLFLNNALNH…VMMKPTLFLA (87 aa)) lie on the Cytoplasmic side of the membrane. The chain crosses the membrane as a helical span at residues 275 to 294 (AMAGGISGTFTFQLLDAGLK). Topologically, residues 295-316 (SPASPGSIIAIIATAPKGVWPH) are extracellular. The chain crosses the membrane as a helical span at residues 317-338 (LNVLLGVLVAAVVSFLVAALIL). Topologically, residues 339 to 589 (HADKSTEDSL…YDKMAARMYK (251 aa)) are cytoplasmic. The 96-residue stretch at 381-476 (EKIIFACDAG…SLTGASPIAE (96 aa)) folds into the PTS EIIB type-2 domain. Cysteine 387 (phosphocysteine intermediate; for EIIB activity) is an active-site residue. Phosphocysteine; by EIIA is present on cysteine 387.

In terms of assembly, homodimer.

It localises to the cell membrane. It carries out the reaction D-mannitol(out) + N(pros)-phospho-L-histidyl-[protein] = D-mannitol 1-phosphate(in) + L-histidyl-[protein]. Its function is as follows. The phosphoenolpyruvate-dependent sugar phosphotransferase system (sugar PTS), a major carbohydrate active transport system, catalyzes the phosphorylation of incoming sugar substrates concomitantly with their translocation across the cell membrane. The enzyme II CmtAB PTS system is involved in D-mannitol transport. The protein is PTS system mannitol-specific EIICB component (mtlA) of Streptococcus pneumoniae serotype 4 (strain ATCC BAA-334 / TIGR4).